Here is a 313-residue protein sequence, read N- to C-terminus: Aspartate carbamoyltransferase catalytic subunit (313 aa).

Carbamoyl phosphate-binding residues include Arg-58 and Thr-59. Residue Lys-86 coordinates L-aspartate. 3 residues coordinate carbamoyl phosphate: Arg-108, His-136, and Gln-139. Arg-169 and Arg-223 together coordinate L-aspartate. Positions 264 and 265 each coordinate carbamoyl phosphate.

The protein belongs to the aspartate/ornithine carbamoyltransferase superfamily. ATCase family. Heterododecamer (2C3:3R2) of six catalytic PyrB chains organized as two trimers (C3), and six regulatory PyrI chains organized as three dimers (R2).

The catalysed reaction is carbamoyl phosphate + L-aspartate = N-carbamoyl-L-aspartate + phosphate + H(+). The protein operates within pyrimidine metabolism; UMP biosynthesis via de novo pathway; (S)-dihydroorotate from bicarbonate: step 2/3. In terms of biological role, catalyzes the condensation of carbamoyl phosphate and aspartate to form carbamoyl aspartate and inorganic phosphate, the committed step in the de novo pyrimidine nucleotide biosynthesis pathway. In Halothermothrix orenii (strain H 168 / OCM 544 / DSM 9562), this protein is Aspartate carbamoyltransferase catalytic subunit.